We begin with the raw amino-acid sequence, 571 residues long: uncharacterized protein (571 aa).

Disordered stretches follow at residues 71-128, 142-258, and 298-336; these read TNHY…RVTA, NKND…PQNE, and LNRQ…TTKR. Residues 88–113 show a composition bias toward polar residues; that stretch reads PNRSGVSSPVNDGASSPTQRGGTTPA. Pro residues predominate over residues 168–184; the sequence is RGYPGPGPRGYPGPGPR. The span at 205–215 shows a compositional bias: low complexity; that stretch reads QGPRRYSCPGP. The segment covering 217–234 has biased composition (gly residues); sequence GYPGPGSSGRPDPGGGLQ. Positions 311 to 326 are enriched in low complexity; it reads PEKQQTPPPEETQNAQ.

This is an uncharacterized protein from Drosophila melanogaster (Fruit fly).